The sequence spans 61 residues: PILIFAFVMFAVMVNAKPSIDDAEMKREPKPNIINAPCSGCYYQVGNECVYDKLKCGPVRK.

An N-terminal signal peptide occupies residues 1 to 19 (PILIFAFVMFAVMVNAKPS). Positions 20–31 (IDDAEMKREPKP) are excised as a propeptide. 2 disulfides stabilise this stretch: Cys38/Cys49 and Cys41/Cys56.

It belongs to the Hau1a/HC18/HC19 family.

The protein localises to the secreted. It is found in the nematocyst. Toxin that is lethal to crab. Does not produce the typical symptoms associated with sodium channel toxins in crabs, suggesting that it likely does not act on sodium channels. The sequence is that of U-stichotoxin-Hcr1b from Radianthus crispa (Leathery sea anemone).